The following is a 526-amino-acid chain: CTP synthase (526 aa).

Residues 1-270 (MKYIFVTGGV…ADVLSTHLGL (270 aa)) are amidoligase domain. Ser12 contacts CTP. Residue Ser12 participates in UTP binding. Residues 13–18 (GLGKGI) and Asp70 contribute to the ATP site. Residues Asp70 and Glu145 each coordinate Mg(2+). Residues 152 to 154 (DIE), 191 to 196 (KTKPTQ), and Lys227 each bind CTP. UTP is bound by residues 191 to 196 (KTKPTQ) and Lys227. The Glutamine amidotransferase type-1 domain maps to 293–525 (VAIVSKYGIE…VEACRANKRT (233 aa)). An L-glutamine-binding site is contributed by Gly349. The Nucleophile; for glutamine hydrolysis role is filled by Cys376. Residues 377 to 380 (LGFQ), Glu400, and Arg455 contribute to the L-glutamine site. Active-site residues include His498 and Glu500.

Belongs to the CTP synthase family. As to quaternary structure, homotetramer.

It carries out the reaction UTP + L-glutamine + ATP + H2O = CTP + L-glutamate + ADP + phosphate + 2 H(+). The enzyme catalyses L-glutamine + H2O = L-glutamate + NH4(+). It catalyses the reaction UTP + NH4(+) + ATP = CTP + ADP + phosphate + 2 H(+). Its pathway is pyrimidine metabolism; CTP biosynthesis via de novo pathway; CTP from UDP: step 2/2. Allosterically activated by GTP, when glutamine is the substrate; GTP has no effect on the reaction when ammonia is the substrate. The allosteric effector GTP functions by stabilizing the protein conformation that binds the tetrahedral intermediate(s) formed during glutamine hydrolysis. Inhibited by the product CTP, via allosteric rather than competitive inhibition. In terms of biological role, catalyzes the ATP-dependent amination of UTP to CTP with either L-glutamine or ammonia as the source of nitrogen. Regulates intracellular CTP levels through interactions with the four ribonucleotide triphosphates. The chain is CTP synthase from Methanoregula boonei (strain DSM 21154 / JCM 14090 / 6A8).